A 160-amino-acid polypeptide reads, in one-letter code: SsrA-binding protein (160 aa).

Belongs to the SmpB family.

The protein localises to the cytoplasm. Functionally, required for rescue of stalled ribosomes mediated by trans-translation. Binds to transfer-messenger RNA (tmRNA), required for stable association of tmRNA with ribosomes. tmRNA and SmpB together mimic tRNA shape, replacing the anticodon stem-loop with SmpB. tmRNA is encoded by the ssrA gene; the 2 termini fold to resemble tRNA(Ala) and it encodes a 'tag peptide', a short internal open reading frame. During trans-translation Ala-aminoacylated tmRNA acts like a tRNA, entering the A-site of stalled ribosomes, displacing the stalled mRNA. The ribosome then switches to translate the ORF on the tmRNA; the nascent peptide is terminated with the 'tag peptide' encoded by the tmRNA and targeted for degradation. The ribosome is freed to recommence translation, which seems to be the essential function of trans-translation. This is SsrA-binding protein from Novosphingobium aromaticivorans (strain ATCC 700278 / DSM 12444 / CCUG 56034 / CIP 105152 / NBRC 16084 / F199).